We begin with the raw amino-acid sequence, 471 residues long: GDP-fucose protein O-fucosyltransferase 3 (471 aa).

At 1 to 8 the chain is on the cytoplasmic side; that stretch reads MNRMWEKK. A helical; Signal-anchor for type II membrane protein transmembrane segment spans residues 9 to 29; the sequence is FWISCFFIILFFILVTLQVMV. At 30 to 471 the chain is on the lumenal side; the sequence is ELGRFEKRET…EFWNLVFKFQ (442 aa). N102, N122, N160, and N310 each carry an N-linked (GlcNAc...) asparagine glycan. C381 and C384 are oxidised to a cystine. Residue N457 is glycosylated (N-linked (GlcNAc...) asparagine).

It belongs to the glycosyltransferase 10 family.

The protein resides in the endoplasmic reticulum membrane. It carries out the reaction L-threonyl-[protein] + GDP-beta-L-fucose = 3-O-(alpha-L-fucosyl)-L-threonyl-[protein] + GDP + H(+). The enzyme catalyses L-seryl-[protein] + GDP-beta-L-fucose = 3-O-(alpha-L-fucosyl)-L-seryl-[protein] + GDP + H(+). Its pathway is protein modification; protein glycosylation. Protein O-fucosyltransferase that specifically catalyzes O-fucosylation of serine or threonine residues in EMI domains of target proteins. Attaches fucose through an O-glycosidic linkage. O-fucosylation of EMI domain-containing proteins may be required for facilitating protein folding and secretion. The sequence is that of GDP-fucose protein O-fucosyltransferase 3 (fut10) from Xenopus tropicalis (Western clawed frog).